We begin with the raw amino-acid sequence, 675 residues long: Probable potassium transport system protein Kup (675 aa).

A compositionally biased stretch (basic and acidic residues) spans 1 to 12; it reads MEPAMPEHDGDH. Positions 1–25 are disordered; that stretch reads MEPAMPEHDGDHASNPPHGVGIPND. Helical transmembrane passes span 62–82, 104–124, 153–173, 195–215, 222–242, 255–275, 300–320, 332–352, 390–410, 419–439, 450–470, and 472–492; these read ALLA…LYAL, LASL…VILI, WLFG…SIIT, IIIP…VLGT, FGPI…KGIF, FALE…GSVV, WLFF…ALLI, LLVP…ATVI, IYLP…VLAF, AYGI…MVVF, VAIV…ANVL, and IPDG…IMTT.

Belongs to the HAK/KUP transporter (TC 2.A.72) family.

It is found in the cell inner membrane. It catalyses the reaction K(+)(in) + H(+)(in) = K(+)(out) + H(+)(out). Functionally, transport of potassium into the cell. Likely operates as a K(+):H(+) symporter. This is Probable potassium transport system protein Kup from Gluconobacter oxydans (strain 621H) (Gluconobacter suboxydans).